A 507-amino-acid chain; its full sequence is Histidine ammonia-lyase (507 aa).

The 5-imidazolinone (Ala-Gly) cross-link spans 141–143 (ASG). Residue Ser142 is modified to 2,3-didehydroalanine (Ser).

This sequence belongs to the PAL/histidase family. In terms of processing, contains an active site 4-methylidene-imidazol-5-one (MIO), which is formed autocatalytically by cyclization and dehydration of residues Ala-Ser-Gly.

It is found in the cytoplasm. It catalyses the reaction L-histidine = trans-urocanate + NH4(+). It functions in the pathway amino-acid degradation; L-histidine degradation into L-glutamate; N-formimidoyl-L-glutamate from L-histidine: step 1/3. This is Histidine ammonia-lyase from Burkholderia orbicola (strain MC0-3).